The chain runs to 417 residues: Serine hydroxymethyltransferase (417 aa).

(6S)-5,6,7,8-tetrahydrofolate is bound by residues Leu121 and 125–127; that span reads GHL. Residue Lys230 is modified to N6-(pyridoxal phosphate)lysine. Residue 355-357 participates in (6S)-5,6,7,8-tetrahydrofolate binding; sequence SPF.

Belongs to the SHMT family. In terms of assembly, homodimer. It depends on pyridoxal 5'-phosphate as a cofactor.

Its subcellular location is the cytoplasm. The catalysed reaction is (6R)-5,10-methylene-5,6,7,8-tetrahydrofolate + glycine + H2O = (6S)-5,6,7,8-tetrahydrofolate + L-serine. The protein operates within one-carbon metabolism; tetrahydrofolate interconversion. It participates in amino-acid biosynthesis; glycine biosynthesis; glycine from L-serine: step 1/1. Functionally, catalyzes the reversible interconversion of serine and glycine with tetrahydrofolate (THF) serving as the one-carbon carrier. This reaction serves as the major source of one-carbon groups required for the biosynthesis of purines, thymidylate, methionine, and other important biomolecules. Also exhibits THF-independent aldolase activity toward beta-hydroxyamino acids, producing glycine and aldehydes, via a retro-aldol mechanism. The protein is Serine hydroxymethyltransferase of Legionella pneumophila (strain Corby).